The following is a 55-amino-acid chain: Large ribosomal subunit protein bL33c (55 aa).

It belongs to the bacterial ribosomal protein bL33 family.

It localises to the plastid. The protein resides in the chloroplast. The chain is Large ribosomal subunit protein bL33c from Emiliania huxleyi (Coccolithophore).